Reading from the N-terminus, the 362-residue chain is NAC domain-containing protein 5 (362 aa).

The 149-residue stretch at 3–151 (NPVGFRFRPT…TYTLCKVKFK (149 aa)) folds into the NAC domain. Residues 107 to 157 (IGEKRVLVFKNHGGSKSDWAMHEYHATFSSPNQIMTYTLCKVKFKGERREF) mediate DNA binding. The disordered stretch occupies residues 240–266 (DDRNNHTPQKPLTGVFSDHSTDGSDSD).

The protein resides in the nucleus. The polypeptide is NAC domain-containing protein 5 (NAC005) (Arabidopsis thaliana (Mouse-ear cress)).